The chain runs to 133 residues: ATP synthase epsilon chain (133 aa).

Belongs to the ATPase epsilon chain family. In terms of assembly, F-type ATPases have 2 components, CF(1) - the catalytic core - and CF(0) - the membrane proton channel. CF(1) has five subunits: alpha(3), beta(3), gamma(1), delta(1), epsilon(1). CF(0) has three main subunits: a, b and c.

The protein localises to the cell membrane. Its function is as follows. Produces ATP from ADP in the presence of a proton gradient across the membrane. The sequence is that of ATP synthase epsilon chain from Bacillus mycoides (strain KBAB4) (Bacillus weihenstephanensis).